A 255-amino-acid polypeptide reads, in one-letter code: Tabinhibitin 1 (255 aa).

Positions 1–23 are cleaved as a signal peptide; the sequence is MTSILVSRFLIAALVLQYATSDA. Residues 67–211 enclose the SCP domain; the sequence is LSKINDVRDH…KARALLTCNF (145 aa).

Belongs to the CRISP family. In terms of tissue distribution, expressed in salivary glands.

The protein resides in the secreted. Inhibits platelet aggregation induced by all agonists tested. May act by competing with fibrinogen for binding to glycoprotein IIb/IIIa (ITGA2B/ITGB3). This is Tabinhibitin 1 from Tabanus yao (Horsefly).